A 79-amino-acid chain; its full sequence is Cell division protein ZapB (79 aa).

The stretch at 4-78 (EVFEKLEAKV…LRALLGKMEE (75 aa)) forms a coiled coil.

This sequence belongs to the ZapB family. Homodimer. The ends of the coiled-coil dimer bind to each other, forming polymers. Interacts with FtsZ.

It localises to the cytoplasm. Its function is as follows. Non-essential, abundant cell division factor that is required for proper Z-ring formation. It is recruited early to the divisome by direct interaction with FtsZ, stimulating Z-ring assembly and thereby promoting cell division earlier in the cell cycle. Its recruitment to the Z-ring requires functional FtsA or ZipA. The chain is Cell division protein ZapB from Pectobacterium carotovorum subsp. carotovorum (strain PC1).